The following is a 993-amino-acid chain: Serine/threonine-protein phosphatase 6 regulatory ankyrin repeat subunit B (993 aa).

ANK repeat units follow at residues 7–36 (TDQP…DVNT), 40–69 (EKRT…RVNA), 73–102 (MWLT…DVNA), 106–135 (NWQT…SVNV), 139–168 (GGRT…NINA), 172–201 (KDRR…EVTC), 205–234 (KGYT…EIDE), 238–267 (YGNT…NVNQ), 271–301 (NGFT…DVNI), 305–334 (DGKS…EIDC), 338–367 (DGNT…DTAK), 371–400 (HSMF…EIDT), 404–433 (FGRT…DFHK), 437–466 (CGRT…NVNE), 470–498 (WGRT…DNSE), 531–561 (EGYN…GFEE), 566–595 (ATKS…DLDI), 599–628 (KGRT…SIFV), 633–662 (TKRT…NPEA), 669–698 (KGQT…NVDT), 702–731 (LGCT…SILC), 735–764 (RGRT…SEED), 771–800 (QGYT…FRKF), 803–832 (NPFT…SSIV), 838–867 (KGRT…PVNA), 871–901 (SGKT…DLTV), 905–934 (DLNT…DESL), and 941–970 (ALQT…CVLA).

Protein phosphatase 6 (PP6) holoenzyme is proposed to be a heterotrimeric complex formed by the catalytic subunit, a SAPS domain-containing subunit (PP6R) and an ankyrin repeat-domain containing regulatory subunit (ARS). Interacts with PPP6R1.

Putative regulatory subunit of protein phosphatase 6 (PP6) that may be involved in the recognition of phosphoprotein substrates. The polypeptide is Serine/threonine-protein phosphatase 6 regulatory ankyrin repeat subunit B (ANKRD44) (Homo sapiens (Human)).